The primary structure comprises 334 residues: GTP 3',8-cyclase (334 aa).

One can recognise a Radical SAM core domain in the interval 13–239 (RFQRKFYYLR…KARADNDGPA (227 aa)). Residue Arg-22 coordinates GTP. [4Fe-4S] cluster is bound by residues Cys-29 and Cys-33. Tyr-35 contacts S-adenosyl-L-methionine. Cys-36 lines the [4Fe-4S] cluster pocket. Arg-73 contributes to the GTP binding site. An S-adenosyl-L-methionine-binding site is contributed by Gly-77. Thr-104 is a GTP binding site. Ser-128 lines the S-adenosyl-L-methionine pocket. Lys-165 is a GTP binding site. Residue Met-199 coordinates S-adenosyl-L-methionine. Positions 262 and 265 each coordinate [4Fe-4S] cluster. GTP is bound at residue 267–269 (RLR). Cys-279 is a binding site for [4Fe-4S] cluster.

This sequence belongs to the radical SAM superfamily. MoaA family. In terms of assembly, monomer and homodimer. [4Fe-4S] cluster serves as cofactor.

The catalysed reaction is GTP + AH2 + S-adenosyl-L-methionine = (8S)-3',8-cyclo-7,8-dihydroguanosine 5'-triphosphate + 5'-deoxyadenosine + L-methionine + A + H(+). It functions in the pathway cofactor biosynthesis; molybdopterin biosynthesis. Its function is as follows. Catalyzes the cyclization of GTP to (8S)-3',8-cyclo-7,8-dihydroguanosine 5'-triphosphate. The sequence is that of GTP 3',8-cyclase from Vibrio cholerae serotype O1 (strain M66-2).